Consider the following 72-residue polypeptide: Translation initiation factor IF-1 (72 aa).

In terms of domain architecture, S1-like spans 1–72 (MAKDDVIEVD…DKGRITYRHK (72 aa)).

It belongs to the IF-1 family. Component of the 30S ribosomal translation pre-initiation complex which assembles on the 30S ribosome in the order IF-2 and IF-3, IF-1 and N-formylmethionyl-tRNA(fMet); mRNA recruitment can occur at any time during PIC assembly.

The protein localises to the cytoplasm. One of the essential components for the initiation of protein synthesis. Stabilizes the binding of IF-2 and IF-3 on the 30S subunit to which N-formylmethionyl-tRNA(fMet) subsequently binds. Helps modulate mRNA selection, yielding the 30S pre-initiation complex (PIC). Upon addition of the 50S ribosomal subunit IF-1, IF-2 and IF-3 are released leaving the mature 70S translation initiation complex. This is Translation initiation factor IF-1 from Helicobacter hepaticus (strain ATCC 51449 / 3B1).